Reading from the N-terminus, the 62-residue chain is Conotoxin Sr5.6 (62 aa).

Positions 1–22 (MRCLPVFVILLLLIASASSVDA) are cleaved as a signal peptide. A propeptide spanning residues 23-44 (QLKTKDDVPLTSVHDNAKGTQH) is cleaved from the precursor. At proline 61 the chain carries Proline amide.

The protein belongs to the conotoxin T superfamily. Contains 2 disulfide bonds that can be either 'C1-C3, C2-C4' or 'C1-C4, C2-C3', since these disulfide connectivities have been observed for conotoxins with cysteine framework V (for examples, see AC P0DQQ7 and AC P81755). Expressed by the venom duct.

It localises to the secreted. This is Conotoxin Sr5.6 from Conus spurius (Alphabet cone).